Consider the following 449-residue polypeptide: Naphthalene 1,2-dioxygenase system, large oxygenase component (449 aa).

One can recognise a Rieske domain in the interval 39–137; it reads WLFLTHDSLI…LNKKCLGLKE (99 aa). Residues Cys-81, His-83, Cys-101, and His-104 each contribute to the [2Fe-2S] cluster site. His-208, His-213, and Asp-362 together coordinate Fe cation.

It belongs to the bacterial ring-hydroxylating dioxygenase alpha subunit family. As to quaternary structure, the naphthalene dioxygenase (NDO) multicomponent enzyme system is composed of an electron transfer component and a dioxygenase component (iron sulfur protein (ISP)). The electron transfer component is composed of a ferredoxin reductase (NdoR) and a ferredoxin (NdoA), and the dioxygenase component is formed of a heterohexamer (trimer of heterodimers) of three large alpha subunits (NdoB) and three small beta subunits (NdoC). The cofactor is [2Fe-2S] cluster. Requires Fe(2+) as cofactor.

The catalysed reaction is naphthalene + NADH + O2 + H(+) = (1R,2S)-1,2-dihydronaphthalene-1,2-diol + NAD(+). It functions in the pathway aromatic compound metabolism; naphthalene degradation. In terms of biological role, component of the naphthalene dioxygenase (NDO) multicomponent enzyme system which catalyzes the incorporation of both atoms of molecular oxygen into naphthalene to form cis-(1R,2S)-dihydroxy-1,2-dihydronaphthalene. The alpha subunit has a catalytic role in the holoenzyme. Also able to catalyze the cis-dihydroxylation of biphenyl and phenanthrene. The chain is Naphthalene 1,2-dioxygenase system, large oxygenase component from Pseudomonas putida (Arthrobacter siderocapsulatus).